The following is a 146-amino-acid chain: Large ribosomal subunit protein uL15 (146 aa).

Over residues 1–10 (MKLHELKPAE) the composition is skewed to basic and acidic residues. The tract at residues 1–51 (MKLHELKPAEGSRQVRNRVGRGTSSGNGKTAGRGQKGQKARSGGGVRLGFE) is disordered. Composition is skewed to gly residues over residues 23-35 (TSSG…GRGQ) and 42-51 (SGGGVRLGFE).

This sequence belongs to the universal ribosomal protein uL15 family. In terms of assembly, part of the 50S ribosomal subunit.

Its function is as follows. Binds to the 23S rRNA. The sequence is that of Large ribosomal subunit protein uL15 from Enterococcus faecalis (strain ATCC 700802 / V583).